The sequence spans 535 residues: Bifunctional purine biosynthesis protein PurH (535 aa).

An MGS-like domain is found at 6 to 151 (TRLPIRRALI…KNHKDVAIVV (146 aa)).

This sequence belongs to the PurH family.

The catalysed reaction is (6R)-10-formyltetrahydrofolate + 5-amino-1-(5-phospho-beta-D-ribosyl)imidazole-4-carboxamide = 5-formamido-1-(5-phospho-D-ribosyl)imidazole-4-carboxamide + (6S)-5,6,7,8-tetrahydrofolate. The enzyme catalyses IMP + H2O = 5-formamido-1-(5-phospho-D-ribosyl)imidazole-4-carboxamide. It functions in the pathway purine metabolism; IMP biosynthesis via de novo pathway; 5-formamido-1-(5-phospho-D-ribosyl)imidazole-4-carboxamide from 5-amino-1-(5-phospho-D-ribosyl)imidazole-4-carboxamide (10-formyl THF route): step 1/1. It participates in purine metabolism; IMP biosynthesis via de novo pathway; IMP from 5-formamido-1-(5-phospho-D-ribosyl)imidazole-4-carboxamide: step 1/1. The sequence is that of Bifunctional purine biosynthesis protein PurH from Pseudomonas paraeruginosa (strain DSM 24068 / PA7) (Pseudomonas aeruginosa (strain PA7)).